The primary structure comprises 309 residues: Sulfate adenylyltransferase subunit 2 (309 aa).

This sequence belongs to the PAPS reductase family. CysD subfamily. In terms of assembly, heterodimer composed of CysD, the smaller subunit, and CysN.

The enzyme catalyses sulfate + ATP + H(+) = adenosine 5'-phosphosulfate + diphosphate. The protein operates within sulfur metabolism; hydrogen sulfide biosynthesis; sulfite from sulfate: step 1/3. Its function is as follows. With CysN forms the ATP sulfurylase (ATPS) that catalyzes the adenylation of sulfate producing adenosine 5'-phosphosulfate (APS) and diphosphate, the first enzymatic step in sulfur assimilation pathway. APS synthesis involves the formation of a high-energy phosphoric-sulfuric acid anhydride bond driven by GTP hydrolysis by CysN coupled to ATP hydrolysis by CysD. The sequence is that of Sulfate adenylyltransferase subunit 2 from Aeromonas salmonicida (strain A449).